Reading from the N-terminus, the 257-residue chain is Acetylglutamate kinase (257 aa).

Residues 43-44, Arg-65, and Asn-157 each bind substrate; that span reads GG. Residues 180-185 and 208-210 each bind ATP; these read DVSGIL and IIT.

The protein belongs to the acetylglutamate kinase family. ArgB subfamily. In terms of assembly, homodimer.

The protein resides in the cytoplasm. The enzyme catalyses N-acetyl-L-glutamate + ATP = N-acetyl-L-glutamyl 5-phosphate + ADP. It functions in the pathway amino-acid biosynthesis; L-arginine biosynthesis; N(2)-acetyl-L-ornithine from L-glutamate: step 2/4. In terms of biological role, catalyzes the ATP-dependent phosphorylation of N-acetyl-L-glutamate. The polypeptide is Acetylglutamate kinase (Proteus mirabilis (strain HI4320)).